The primary structure comprises 327 residues: MTRQGMRDDLRGEADSVVHDGTDDIDNENDIDNGIDNENGNGIDVVLVTGLSGAGRGTAAKVLEDLGWYVADNLPPELIAQMVDLGLAAGSRITQLAAVMDVRSRGFTGDLDWVRSELATRNIVPRVVFLEASDDILVRRYEQNRRSHPLQGNQTLAEGIAAERAMLAPVRASADLVIDTSALSVHGLRDSIERAFAAETVAHTNVTVESFGYKYGLPMDADTVMDVRFLPNPHWIDRLRPHTGQNADVRDYVLGQPGADEFLDSYHQLLNVVIDGYRREGKRYMTVAIGCTGGKHRSVAMAEALAARLAGSDALTVRVLHRDLGRE.

The span at 1–22 shows a compositional bias: basic and acidic residues; sequence MTRQGMRDDLRGEADSVVHDGT. A disordered region spans residues 1-29; it reads MTRQGMRDDLRGEADSVVHDGTDDIDNEN. 50–57 lines the ATP pocket; it reads GLSGAGRG. Residue 101–104 participates in GTP binding; that stretch reads DVRS.

This sequence belongs to the RapZ-like family.

Displays ATPase and GTPase activities. The polypeptide is Nucleotide-binding protein Mflv_3714 (Mycolicibacterium gilvum (strain PYR-GCK) (Mycobacterium gilvum (strain PYR-GCK))).